We begin with the raw amino-acid sequence, 307 residues long: UDP-3-O-acyl-N-acetylglucosamine deacetylase (307 aa).

Positions 80, 239, and 243 each coordinate Zn(2+). His266 serves as the catalytic Proton donor.

This sequence belongs to the LpxC family. It depends on Zn(2+) as a cofactor.

It carries out the reaction a UDP-3-O-[(3R)-3-hydroxyacyl]-N-acetyl-alpha-D-glucosamine + H2O = a UDP-3-O-[(3R)-3-hydroxyacyl]-alpha-D-glucosamine + acetate. The protein operates within glycolipid biosynthesis; lipid IV(A) biosynthesis; lipid IV(A) from (3R)-3-hydroxytetradecanoyl-[acyl-carrier-protein] and UDP-N-acetyl-alpha-D-glucosamine: step 2/6. In terms of biological role, catalyzes the hydrolysis of UDP-3-O-myristoyl-N-acetylglucosamine to form UDP-3-O-myristoylglucosamine and acetate, the committed step in lipid A biosynthesis. The chain is UDP-3-O-acyl-N-acetylglucosamine deacetylase from Neisseria gonorrhoeae (strain ATCC 700825 / FA 1090).